The sequence spans 204 residues: NAD(P)H dehydrogenase (quinone) (204 aa).

Residues 3-194 (VLIVFYSMYG…AGARYQGRHV (192 aa)) form the Flavodoxin-like domain. Residues 9–14 (SMYGHI) and 82–84 (TRF) contribute to the FMN site. Tyr11 contacts NAD(+). Position 102 (Trp102) interacts with substrate. His138 lines the FMN pocket.

It belongs to the WrbA family. FMN serves as cofactor.

It catalyses the reaction a quinone + NADH + H(+) = a quinol + NAD(+). It carries out the reaction a quinone + NADPH + H(+) = a quinol + NADP(+). The chain is NAD(P)H dehydrogenase (quinone) from Syntrophobacter fumaroxidans (strain DSM 10017 / MPOB).